The chain runs to 425 residues: Serine--tRNA ligase (425 aa).

Thr231–Glu233 lines the L-serine pocket. Arg262–Glu264 contacts ATP. Glu285 contributes to the L-serine binding site. Residue Glu349–Ser352 coordinates ATP. Ser385 serves as a coordination point for L-serine.

Belongs to the class-II aminoacyl-tRNA synthetase family. Type-1 seryl-tRNA synthetase subfamily. As to quaternary structure, homodimer. The tRNA molecule binds across the dimer.

The protein resides in the cytoplasm. The enzyme catalyses tRNA(Ser) + L-serine + ATP = L-seryl-tRNA(Ser) + AMP + diphosphate + H(+). The catalysed reaction is tRNA(Sec) + L-serine + ATP = L-seryl-tRNA(Sec) + AMP + diphosphate + H(+). The protein operates within aminoacyl-tRNA biosynthesis; selenocysteinyl-tRNA(Sec) biosynthesis; L-seryl-tRNA(Sec) from L-serine and tRNA(Sec): step 1/1. Functionally, catalyzes the attachment of serine to tRNA(Ser). Is also able to aminoacylate tRNA(Sec) with serine, to form the misacylated tRNA L-seryl-tRNA(Sec), which will be further converted into selenocysteinyl-tRNA(Sec). This is Serine--tRNA ligase from Bartonella quintana (strain Toulouse) (Rochalimaea quintana).